A 112-amino-acid polypeptide reads, in one-letter code: Ribonuclease P protein component (112 aa).

It belongs to the RnpA family. As to quaternary structure, consists of a catalytic RNA component (M1 or rnpB) and a protein subunit.

The enzyme catalyses Endonucleolytic cleavage of RNA, removing 5'-extranucleotides from tRNA precursor.. In terms of biological role, RNaseP catalyzes the removal of the 5'-leader sequence from pre-tRNA to produce the mature 5'-terminus. It can also cleave other RNA substrates such as 4.5S RNA. The protein component plays an auxiliary but essential role in vivo by binding to the 5'-leader sequence and broadening the substrate specificity of the ribozyme. In Mycoplasmopsis synoviae (strain 53) (Mycoplasma synoviae), this protein is Ribonuclease P protein component.